A 255-amino-acid chain; its full sequence is Type III pantothenate kinase (255 aa).

Residue 6–13 (DVGNTNIV) participates in ATP binding. Residues Y100 and 107 to 110 (GADR) contribute to the substrate site. The active-site Proton acceptor is the D109. Residue D129 participates in K(+) binding. T132 serves as a coordination point for ATP. Residue T184 coordinates substrate.

The protein belongs to the type III pantothenate kinase family. As to quaternary structure, homodimer. The cofactor is NH4(+). Requires K(+) as cofactor.

It is found in the cytoplasm. The enzyme catalyses (R)-pantothenate + ATP = (R)-4'-phosphopantothenate + ADP + H(+). Its pathway is cofactor biosynthesis; coenzyme A biosynthesis; CoA from (R)-pantothenate: step 1/5. Its function is as follows. Catalyzes the phosphorylation of pantothenate (Pan), the first step in CoA biosynthesis. In Thermoanaerobacter sp. (strain X514), this protein is Type III pantothenate kinase.